Consider the following 274-residue polypeptide: MEKIIEINDSIIQISDLNDRIYIMKLGKDVGELIKHVDSVCNEKKLSKVFAKVSGNKKELFEKNGYICEGKLENYYSNDDAYFMSKFFEESRKISKFSKEAEDVLNYVKTVGVNPHTKIDEKFHLKIANETDAEKLSKHYSKVFKTYPFPIDDPNYILKTMQTNVKYFIIEDNGKIVAASSCEMDIKNKCVEMTDFAVLEEYQKLGLSKYLLYIMEKIMKDNGYRVFYTIARSISYGMNITFKKMGYMYSGTAVNNTNICGNFEDMNFWYKLSE.

An N-acetyltransferase domain is found at 123–274 (FHLKIANETD…DMNFWYKLSE (152 aa)).

The protein belongs to the acetyltransferase family.

It catalyses the reaction (3S)-3,6-diaminohexanoate + acetyl-CoA = (3S)-6-acetamido-3-aminohexanoate + CoA + H(+). In terms of biological role, catalyzes the acetylation of beta-lysine to N6-acetyl-beta-lysine, a compatible solute produced by methanogenic archaea that helps cells to cope with salt stress. This chain is Beta-lysine N(6)-acetyltransferase, found in Methanococcus maripaludis (strain DSM 14266 / JCM 13030 / NBRC 101832 / S2 / LL).